The primary structure comprises 333 residues: MRVLASAPAKIILFGEHSVVYGKPAIAAAIDLRTYVKAEFNENGRIRIEAKDIRTPGLTVSFSEDQIYFETDYGKAAEVLSYVREAINLVMEEAEKQKGVTVSITSQIPVGAGLGSSAAVAVATIGAVSRLFGLELTPEEVAKLGHKVELLVQGASSGIDPTVSAIGGFLYYQKGSFESLPVVELPIVVGYTGSSGSTKELVAKVRKNYEEMPEIIDPILNSMGRLVEKAREVILAEYDKEIKFKRLGTLMNINHGLLDALGVSTKSLSDLVYASREAGALGAKITGAGGGGCMYALAPEKQSEVATAIKIAGGMPIVTKISREGLRIEDIVQ.

Residue 109 to 119 (PVGAGLGSSAA) coordinates ATP. The active-site Proton acceptor is the aspartate 160.

This sequence belongs to the GHMP kinase family. Mevalonate kinase subfamily. Homodimer. Requires Mg(2+) as cofactor.

Its subcellular location is the cytoplasm. It carries out the reaction (R)-mevalonate + ATP = (R)-5-phosphomevalonate + ADP + H(+). Its pathway is isoprenoid biosynthesis; isopentenyl diphosphate biosynthesis via mevalonate pathway; isopentenyl diphosphate from (R)-mevalonate: step 1/3. Functionally, catalyzes the phosphorylation of (R)-mevalonate (MVA) to (R)-mevalonate 5-phosphate (MVAP). Functions in the mevalonate (MVA) pathway leading to isopentenyl diphosphate (IPP), a key precursor for the biosynthesis of isoprenoid compounds such as archaeal membrane lipids. This Thermococcus sibiricus (strain DSM 12597 / MM 739) protein is Mevalonate kinase.